A 502-amino-acid chain; its full sequence is Protein nucleotidyltransferase YdiU (502 aa).

Residues G98, G100, R101, K121, D133, G134, R184, and R191 each coordinate ATP. D260 serves as the catalytic Proton acceptor. Residues N261 and D270 each coordinate Mg(2+). An ATP-binding site is contributed by D270.

It belongs to the SELO family. Mg(2+) serves as cofactor. The cofactor is Mn(2+).

The catalysed reaction is L-seryl-[protein] + ATP = 3-O-(5'-adenylyl)-L-seryl-[protein] + diphosphate. The enzyme catalyses L-threonyl-[protein] + ATP = 3-O-(5'-adenylyl)-L-threonyl-[protein] + diphosphate. It carries out the reaction L-tyrosyl-[protein] + ATP = O-(5'-adenylyl)-L-tyrosyl-[protein] + diphosphate. It catalyses the reaction L-histidyl-[protein] + UTP = N(tele)-(5'-uridylyl)-L-histidyl-[protein] + diphosphate. The catalysed reaction is L-seryl-[protein] + UTP = O-(5'-uridylyl)-L-seryl-[protein] + diphosphate. The enzyme catalyses L-tyrosyl-[protein] + UTP = O-(5'-uridylyl)-L-tyrosyl-[protein] + diphosphate. Nucleotidyltransferase involved in the post-translational modification of proteins. It can catalyze the addition of adenosine monophosphate (AMP) or uridine monophosphate (UMP) to a protein, resulting in modifications known as AMPylation and UMPylation. This Rhizobium rhizogenes (strain K84 / ATCC BAA-868) (Agrobacterium radiobacter) protein is Protein nucleotidyltransferase YdiU.